Reading from the N-terminus, the 63-residue chain is Large ribosomal subunit protein uL30 (63 aa).

This sequence belongs to the universal ribosomal protein uL30 family. As to quaternary structure, part of the 50S ribosomal subunit.

The sequence is that of Large ribosomal subunit protein uL30 from Hahella chejuensis (strain KCTC 2396).